The primary structure comprises 478 residues: MGSDERKPLLSINDGDDDFNHQDVSTKTPPIKKESLSNKFKSFLKKSMTKETLPILIYVLLYIISGVINVVLLKKLMIKFVNYGFFLSQITNYGYLPIFLVAMWYKMYCTSDVPKETRNFPQYKFVIMGLLDAINGFFVVIGGVSTSGPLQQLLNQAIIPFTMIASFIFLRERYSLFQLGGAAVILGGVIVSLIPSLVGGSSGGNILFYNFFYLISVIPGALSNVYKDIAFQSIDMDVWYLQFWDCLYQSLFGSILFPVNNWLPPPATIKFTEIIPSMRDGALCLGGKNTILPIFNGTTSTLAFGSCGINDNFVCDDCHNTWIIVLIYMTVNIAYNIFILLVLKHAGATVYSIANTVILPLTNIFFSIHFIMGAATTPFSALSVAGLLLILFGLGGYRIGSMIKKPPPDSKKDSEQQGGEGGAGDGDSSDNKNNLGDSAEIPQQIQPKTQLHLRNQFFGRLGIDIPESRYRATNIINN.

The tract at residues 1–30 is disordered; it reads MGSDERKPLLSINDGDDDFNHQDVSTKTPP. At 1–52 the chain is on the cytoplasmic side; the sequence is MGSDERKPLLSINDGDDDFNHQDVSTKTPPIKKESLSNKFKSFLKKSMTKET. A helical transmembrane segment spans residues 53–73; it reads LPILIYVLLYIISGVINVVLL. At 74–83 the chain is on the vacuolar side; it reads KKLMIKFVNY. Residues 84–104 traverse the membrane as a helical segment; sequence GFFLSQITNYGYLPIFLVAMW. The Cytoplasmic segment spans residues 105 to 124; the sequence is YKMYCTSDVPKETRNFPQYK. Residues 125 to 145 form a helical membrane-spanning segment; the sequence is FVIMGLLDAINGFFVVIGGVS. Topologically, residues 146–149 are vacuolar; sequence TSGP. The helical transmembrane segment at 150 to 170 threads the bilayer; the sequence is LQQLLNQAIIPFTMIASFIFL. Over 171–178 the chain is Cytoplasmic; the sequence is RERYSLFQ. Residues 179–199 traverse the membrane as a helical segment; sequence LGGAAVILGGVIVSLIPSLVG. At 200-205 the chain is on the vacuolar side; sequence GSSGGN. A helical transmembrane segment spans residues 206–226; sequence ILFYNFFYLISVIPGALSNVY. Topologically, residues 227-237 are cytoplasmic; sequence KDIAFQSIDMD. Residues 238-258 traverse the membrane as a helical segment; that stretch reads VWYLQFWDCLYQSLFGSILFP. Residues 259–322 lie on the Vacuolar side of the membrane; the sequence is VNNWLPPPAT…FVCDDCHNTW (64 aa). The N-linked (GlcNAc...) asparagine glycan is linked to Asn296. A helical membrane pass occupies residues 323 to 343; that stretch reads IIVLIYMTVNIAYNIFILLVL. Residues 344–352 lie on the Cytoplasmic side of the membrane; that stretch reads KHAGATVYS. Residues 353-373 form a helical membrane-spanning segment; it reads IANTVILPLTNIFFSIHFIMG. The Vacuolar segment spans residues 374–376; the sequence is AAT. The helical transmembrane segment at 377–397 threads the bilayer; the sequence is TPFSALSVAGLLLILFGLGGY. Over 398 to 478 the chain is Cytoplasmic; sequence RIGSMIKKPP…RYRATNIINN (81 aa). The interval 404–446 is disordered; sequence KKPPPDSKKDSEQQGGEGGAGDGDSSDNKNNLGDSAEIPQQIQ. Basic and acidic residues predominate over residues 406-415; that stretch reads PPPDSKKDSE.

The protein belongs to the CRT-like transporter family.

It is found in the vacuole membrane. Its function is as follows. Nutrient transporter. Involved in maintaining the osmotic homeostasis of the digestive vacuole. The sequence is that of Crt homolog 3 (crtp3) from Dictyostelium discoideum (Social amoeba).